The sequence spans 323 residues: Ubiquinone biosynthesis protein COQ4, mitochondrial (323 aa).

Positions 205, 206, 209, and 221 each coordinate Zn(2+).

It belongs to the COQ4 family. Component of a multi-subunit COQ enzyme complex, composed of at least COQ3, COQ4, COQ5, COQ6, COQ7 and COQ9. Zn(2+) is required as a cofactor.

Its subcellular location is the mitochondrion inner membrane. It carries out the reaction a 4-hydroxy-3-methoxy-5-(all-trans-polyprenyl)benzoate + H(+) = a 2-methoxy-6-(all-trans-polyprenyl)phenol + CO2. Its pathway is cofactor biosynthesis; ubiquinone biosynthesis. Its function is as follows. Lyase that catalyzes the C1-decarboxylation of 4-hydroxy-3-methoxy-5-(all-trans-polyprenyl)benzoic acid into 2-methoxy-6-(all-trans-polyprenyl)phenol during ubiquinone biosynthesis. The sequence is that of Ubiquinone biosynthesis protein COQ4, mitochondrial from Candida albicans (strain SC5314 / ATCC MYA-2876) (Yeast).